The following is a 350-amino-acid chain: METVQSSSSAELLRAQTHFSTQLFSFQNYASLKCALHLGIPDAIKQHGKPMNLSELTSALPIKPSKAPYIHRLMRMLVKAGYFAQENECFDLTPIGLLLLKDDPINIRALVLLELHPALLLPWIALSEWFQNDDATPFVTAHGKSFWDYTSRDPEFRKLFDEAMAGDSELISKVLVTEFKYVFEGLKSLVDVGGGNGTLARSIAKAFPNLKCTVFDLPEAVANEQGDGNLDFVAGDMFDRVPSADAILLKIVLHDWSDENCVKILKNCRKSIPVKDKGGKVIIIEGVVELEKNAGNEYAGLENLDMEMLVLYNSKERTKKEWAKLFSDAGFSDYKFIPALDSWCIIELTP.

S-adenosyl-L-methionine contacts are provided by G193, D216, D236, M237, and K250. The active-site Proton acceptor is the H254.

The protein belongs to the class I-like SAM-binding methyltransferase superfamily. Cation-independent O-methyltransferase family.

It localises to the cytoplasm. Its subcellular location is the cytosol. It carries out the reaction 7'-O-demethylcephaeline + S-adenosyl-L-methionine = cephaeline + S-adenosyl-L-homocysteine + H(+). The catalysed reaction is cephaeline + S-adenosyl-L-methionine = emetine + S-adenosyl-L-homocysteine + H(+). It participates in alkaloid biosynthesis. Its activity is regulated as follows. Inhibited by Co(2+), Ni(2+), Zn(2+) and Mn(2+) ions. Functionally, O-methyltransferase involved in the biosynthesis of ipecac and benzylisoquinoline monoterpenoid-isoquinoline alkaloids natural products, starting by the condensation of dopamine and secologanin, and including emetine and cephaeline, drugs used both as anti-protozoal (e.g. treatment of ameobiasis) and as emetic agents. Catalyzes successively the 7'-O-methylation of 7'-O-demethylcephaeline to produce cephaeline, and its 6'-O-methylation to produce emetine. This Carapichea ipecacuanha (Ipecac) protein is Cephaeline 6'-O-methyltransferase CiOMT.